Here is a 364-residue protein sequence, read N- to C-terminus: Delta(7)-sterol 5(6)-desaturase (364 aa).

3 helical membrane-spanning segments follow: residues 94-114, 142-162, and 181-201; these read FFSLWAVVTVFGLLLYLITAS, LAVSAIPTMSLLTVPWFMLEL, and KLLIEYATFIFFTDCGIYLAH. In terms of domain architecture, Fatty acid hydroxylase spans 188–312; the sequence is TFIFFTDCGI…FTTLWDRLGG (125 aa). Positions 201–205 match the Histidine box-1 motif; that stretch reads HRWLH. A Histidine box-2 motif is present at residues 214–218; sequence HKPHH. The helical transmembrane segment at 249–269 threads the bilayer; it reads ILPLHKISYLILFTFVNFWSV. A Histidine box-3 motif is present at residues 289-293; the sequence is HTVHH.

The protein belongs to the sterol desaturase family. Fe cation serves as cofactor.

It localises to the endoplasmic reticulum membrane. The enzyme catalyses a Delta(7)-sterol + 2 Fe(II)-[cytochrome b5] + O2 + 2 H(+) = a Delta(5),Delta(7)-sterol + 2 Fe(III)-[cytochrome b5] + 2 H2O. Its pathway is steroid metabolism; ergosterol biosynthesis; ergosterol from zymosterol: step 3/5. Functionally, catalyzes the introduction of a C-5 double bond in the B ring of ergosterol. May contribute to the regulation of ergosterol biosynthesis. This is Delta(7)-sterol 5(6)-desaturase (ERG3) from Candida glabrata (strain ATCC 2001 / BCRC 20586 / JCM 3761 / NBRC 0622 / NRRL Y-65 / CBS 138) (Yeast).